The sequence spans 103 residues: Histone H4 (103 aa).

The segment covering 1-14 (MSGRGKGGKGLGKG) has biased composition (gly residues). Positions 1 to 20 (MSGRGKGGKGLGKGGAKRHR) are disordered. Ser-2 is modified (N-acetylserine). The residue at position 2 (Ser-2) is a Phosphoserine. Arg-4 bears the Asymmetric dimethylarginine; by PRMT1; alternate mark. Arg-4 is subject to Citrulline; alternate. Position 4 is an omega-N-methylarginine; by PRMT1; alternate (Arg-4). Arg-4 is modified (symmetric dimethylarginine; by PRMT5 and PRMT7; alternate). An N6-(2-hydroxyisobutyryl)lysine; alternate mark is found at Lys-6, Lys-9, Lys-13, and Lys-17. An N6-acetyl-N6-methyllysine; alternate modification is found at Lys-6. 4 positions are modified to N6-acetyllysine: Lys-6, Lys-9, Lys-13, and Lys-17. N6-butyryllysine; alternate occurs at positions 6, 9, 13, and 17. Position 6 is an N6-glutaryllysine; alternate (Lys-6). Lys-6, Lys-9, Lys-13, and Lys-17 each carry N6-lactoyllysine; alternate. Lys-9 carries the N6-propionyllysine; alternate modification. N6-acetyl-N6-methyllysine; alternate is present on Lys-13. At Lys-13 the chain carries N6-glutaryllysine; alternate. The residue at position 13 (Lys-13) is an N6-methyllysine; alternate. Lys-17 carries the N6-propionyllysine; alternate modification. A DNA-binding region spans residues 17-21 (KRHRK). Lys-21 carries the post-translational modification N6-methyllysine; alternate. Lys-21 carries the post-translational modification N6,N6,N6-trimethyllysine; alternate. N6,N6-dimethyllysine; alternate is present on Lys-21. The residue at position 21 (Lys-21) is an N6-methylated lysine. Residues Lys-32 and Lys-45 each carry the N6-(2-hydroxyisobutyryl)lysine; alternate modification. At Lys-32 the chain carries N6-acetyllysine. Lys-32 and Lys-45 each carry N6-butyryllysine; alternate. Residue Lys-32 is modified to N6-glutaryllysine; alternate. Lys-32 carries the N6-lactoyllysine; alternate modification. N6-propionyllysine; alternate occurs at positions 32 and 45. An N6-succinyllysine; alternate modification is found at Lys-32. Lys-32 is covalently cross-linked (Glycyl lysine isopeptide (Lys-Gly) (interchain with G-Cter in UFM1); alternate). At Ser-48 the chain carries Phosphoserine; by PAK2. Tyr-52 is modified (phosphotyrosine). Residue Lys-60 is modified to N6-acetyllysine. 3 positions are modified to N6-glutaryllysine; alternate: Lys-60, Lys-78, and Lys-80. At Lys-60 the chain carries N6-(2-hydroxyisobutyryl)lysine. Lys-78 and Lys-80 each carry N6-(2-hydroxyisobutyryl)lysine; alternate. Residues Lys-78 and Lys-80 each carry the N6-butyryllysine; alternate modification. An N6-lactoyllysine; alternate modification is found at Lys-78. 2 positions are modified to N6-propionyllysine; alternate: Lys-78 and Lys-80. At Lys-78 the chain carries N6-succinyllysine. Lys-80 is subject to N6-acetyllysine. Tyr-89 is modified (phosphotyrosine). An N6-(2-hydroxyisobutyryl)lysine; alternate modification is found at Lys-92. At Lys-92 the chain carries N6-butyryllysine; alternate. An N6-glutaryllysine; alternate modification is found at Lys-92. At Lys-92 the chain carries N6-lactoyllysine; alternate. Lys-92 is modified (N6-propionyllysine; alternate). The residue at position 92 (Lys-92) is an N6-succinyllysine; alternate. An N6-acetyllysine; alternate modification is found at Lys-92. Lys-92 participates in a covalent cross-link: Glycyl lysine isopeptide (Lys-Gly) (interchain with G-Cter in ubiquitin); alternate.

It belongs to the histone H4 family. As to quaternary structure, the nucleosome is a histone octamer containing two molecules each of H2A, H2B, H3 and H4 assembled in one H3-H4 heterotetramer and two H2A-H2B heterodimers. The octamer wraps approximately 147 bp of DNA. In terms of processing, acetylation at Lys-6 (H4K5ac), Lys-9 (H4K8ac), Lys-13 (H4K12ac) and Lys-17 (H4K16ac) occurs in coding regions of the genome but not in heterochromatin. Citrullination at Arg-4 (H4R3ci) by PADI4 impairs methylation. Post-translationally, monomethylation and asymmetric dimethylation at Arg-4 (H4R3me1 and H4R3me2a, respectively) by PRMT1 favors acetylation at Lys-9 (H4K8ac) and Lys-13 (H4K12ac). Demethylation is performed by JMJD6. Symmetric dimethylation on Arg-4 (H4R3me2s) by the PRDM1/PRMT5 complex may play a crucial role in the germ-cell lineage. In terms of processing, monomethylated, dimethylated or trimethylated at Lys-21 (H4K20me1, H4K20me2, H4K20me3). Monomethylation is performed by KMT5A/SET8. Trimethylation is performed by KMT5B and KMT5C and induces gene silencing. Monomethylated at Lys-13 (H4K12me1) by N6AMT1; H4K12me1 modification is present at the promoters of numerous genes encoding cell cycle regulators. Acetyl-methylated at Lys-6 and Lys-13 (H4K5acme and H4K12acme, respectively), acetyl-methylation is an epigenetic mark of active chromatin associated with increased transcriptional initiation. Acetyl-methylation is formed by acetylation by EP300/p300 of lysine residues that are already monomethylated on the same side chain. H4K5acme and H4K12acme marks specifically bind BRD2. Post-translationally, phosphorylated by pak2 at Ser-48 (H4S47ph). This phosphorylation increases the association of H3.3-H4 with the histone chaperone HIRA, thus promoting nucleosome assembly of H3.3-H4 and inhibiting nucleosome assembly of H3.1-H4. In terms of processing, ubiquitinated by the CUL4-DDB-RBX1 complex in response to ultraviolet irradiation. This may weaken the interaction between histones and DNA and facilitate DNA accessibility to repair proteins. Monoubiquitinated at Lys-92 of histone H4 (H4K91ub1) in response to DNA damage. The exact role of H4K91ub1 in DNA damage response is still unclear but it may function as a licensing signal for additional histone H4 post-translational modifications such as H4 Lys-21 methylation (H4K20me). Sumoylated, which is associated with transcriptional repression. Post-translationally, butyrylation of histones marks active promoters and competes with histone acetylation. In terms of processing, glutarylation at Lys-92 (H4K91glu) destabilizes nucleosomes by promoting dissociation of the H2A-H2B dimers from nucleosomes. Ufmylated; monofmylated by UFL1 at Lys-32 (H4K31Ufm1) in response to DNA damage. Post-translationally, lactylated in macrophages by EP300/P300 by using lactoyl-CoA directly derived from endogenous or exogenous lactate, leading to stimulates gene transcription. Delactylated by SIRT3 at Lys-17 (H4K16la).

It is found in the nucleus. Its subcellular location is the chromosome. Core component of nucleosome. Nucleosomes wrap and compact DNA into chromatin, limiting DNA accessibility to the cellular machineries which require DNA as a template. Histones thereby play a central role in transcription regulation, DNA repair, DNA replication and chromosomal stability. DNA accessibility is regulated via a complex set of post-translational modifications of histones, also called histone code, and nucleosome remodeling. The chain is Histone H4 from Xenopus laevis (African clawed frog).